A 315-amino-acid chain; its full sequence is Mitochondrial glycine transporter (315 aa).

Solcar repeat units follow at residues 19-102, 125-206, and 221-305; these read SKTT…LRTG, TANL…LKRR, and KSSS…LILR. The next 6 helical transmembrane spans lie at 25–50, 77–103, 128–153, 181–204, 225–251, and 280–298; these read FTAG…TRVQ, GTLP…RTGL, LATG…VRYE, GFGA…EQLK, INFV…KTRL, and GLGL…AWTV.

It belongs to the mitochondrial carrier (TC 2.A.29) family. SLC25A38 subfamily.

It is found in the mitochondrion inner membrane. The enzyme catalyses glycine(in) = glycine(out). Its function is as follows. Mitochondrial glycine transporter that imports glycine into the mitochondrial matrix. Plays an important role in providing glycine for the first enzymatic step in heme biosynthesis, the condensation of glycine with succinyl-CoA to produce 5-aminolevulinate (ALA) in the mitochondrial matrix. The polypeptide is Mitochondrial glycine transporter (Aspergillus niger (strain ATCC MYA-4892 / CBS 513.88 / FGSC A1513)).